The chain runs to 195 residues: U8 snoRNA-decapping enzyme (195 aa).

The Nudix hydrolase domain occupies 18–173 (DWRHACHALL…IGAAREQLLE (156 aa)). Positions 24, 50, and 57 each coordinate substrate. Mn(2+)-binding residues include G59, E76, E80, and H99. The Nudix box motif lies at 61-82 (FVDAQDSCLEDGLNRELREELG). Substrate is bound at residue Q170. A Mn(2+)-binding site is contributed by E173.

The protein belongs to the Nudix hydrolase family. NUDT16 subfamily. As to quaternary structure, homodimer. The cofactor is Mg(2+). Mn(2+) serves as cofactor. It depends on Co(2+) as a cofactor. Expressed in brain, testis, spleen, lung, heart, liver, kidney and muscle (at protein level).

It is found in the nucleus. Its subcellular location is the nucleolus. The protein localises to the nucleoplasm. It localises to the cytoplasm. It carries out the reaction a 5'-end (N(7)-methyl 5'-triphosphoguanosine)-ribonucleoside in mRNA + H2O = N(7)-methyl-GDP + a 5'-end phospho-ribonucleoside in mRNA + 2 H(+). The catalysed reaction is IDP + H2O = IMP + phosphate + H(+). The enzyme catalyses dIDP + H2O = dIMP + phosphate + H(+). It catalyses the reaction a 5'-end NAD(+)-phospho-ribonucleoside in mRNA + H2O = a 5'-end phospho-ribonucleoside in mRNA + NAD(+) + H(+). It carries out the reaction a 5'-end FAD-phospho-ribonucleoside in mRNA + H2O = a 5'-end phospho-adenosine-phospho-ribonucleoside in mRNA + FMN + 2 H(+). The catalysed reaction is a 5'-end CoA-ribonucleoside in mRNA + H2O = a 5'-end phospho-adenosine-phospho-ribonucleoside in mRNA + (R)-4'-phosphopantetheine + 2 H(+). RNA-binding and decapping enzyme that catalyzes the cleavage of the cap structure of snoRNAs and mRNAs in a metal-dependent manner. Part of the U8 snoRNP complex that is required for the accumulation of mature 5.8S and 28S rRNA. Has diphosphatase activity and removes m7G and/or m227G caps from U8 snoRNA and leaves a 5'monophosphate on the RNA. Also catalyzes the cleavage of the cap structure on mRNAs. Does not hydrolyze cap analog structures like 7-methylguanosine nucleoside triphosphate (m7GpppG). Also hydrolysis m7G- and m227G U3-capped RNAs but with less efficiencies. Has broad substrate specificity with manganese or cobalt as cofactor and can act on various RNA species. Binds to the U8 snoRNA; metal is not required for RNA-binding. May play a role in the regulation of snoRNAs and mRNAs degradation. Also acts as a phosphatase; hydrolyzes the non-canonical purine nucleotides inosine diphosphate (IDP) and deoxyinosine diphosphate (dITP) as well as guanosine diphosphate (GDP), deoxyguanosine diphosphate (dGDP), xanthine diphosphate (XDP), inosine triphosphate (ITP) and deoxyinosine triphosphate (ITP) to their respective monophosphate derivatives and does not distinguish between the deoxy- and ribose forms. The order of activity with different substrates is IDP &gt; dIDP &gt;&gt; GDP = dGDP &gt; XDP = ITP = dITP. Binds strongly to GTP, ITP and XTP. Participates in the hydrolysis of dIDP/IDP and probably excludes non-canonical purines from RNA and DNA precursor pools, thus preventing their incorporation into RNA and DNA and avoiding chromosomal lesions. Exhibits decapping activity towards NAD-capped RNAs and FAD-capped RNAs. Exhibits decapping activity towards dpCoA-capped RNAs in vitro. The chain is U8 snoRNA-decapping enzyme (Nudt16) from Mus musculus (Mouse).